A 423-amino-acid chain; its full sequence is Histidine--tRNA ligase 2 (423 aa).

Belongs to the class-II aminoacyl-tRNA synthetase family. As to quaternary structure, homodimer.

The protein localises to the cytoplasm. It catalyses the reaction tRNA(His) + L-histidine + ATP = L-histidyl-tRNA(His) + AMP + diphosphate + H(+). This is Histidine--tRNA ligase 2 from Bacillus cereus (strain ATCC 14579 / DSM 31 / CCUG 7414 / JCM 2152 / NBRC 15305 / NCIMB 9373 / NCTC 2599 / NRRL B-3711).